Here is a 285-residue protein sequence, read N- to C-terminus: Bifunctional protein FolD (285 aa).

NADP(+)-binding positions include 165–167 and Ile232; that span reads GAS.

This sequence belongs to the tetrahydrofolate dehydrogenase/cyclohydrolase family. In terms of assembly, homodimer.

It catalyses the reaction (6R)-5,10-methylene-5,6,7,8-tetrahydrofolate + NADP(+) = (6R)-5,10-methenyltetrahydrofolate + NADPH. The enzyme catalyses (6R)-5,10-methenyltetrahydrofolate + H2O = (6R)-10-formyltetrahydrofolate + H(+). It functions in the pathway one-carbon metabolism; tetrahydrofolate interconversion. Functionally, catalyzes the oxidation of 5,10-methylenetetrahydrofolate to 5,10-methenyltetrahydrofolate and then the hydrolysis of 5,10-methenyltetrahydrofolate to 10-formyltetrahydrofolate. This chain is Bifunctional protein FolD, found in Sulfurihydrogenibium sp. (strain YO3AOP1).